The sequence spans 551 residues: Arginine--tRNA ligase (551 aa).

Positions 123 to 133 match the 'HIGH' region motif; that stretch reads ANPTGPLTIGR.

This sequence belongs to the class-I aminoacyl-tRNA synthetase family. In terms of assembly, monomer.

It is found in the cytoplasm. The enzyme catalyses tRNA(Arg) + L-arginine + ATP = L-arginyl-tRNA(Arg) + AMP + diphosphate. The chain is Arginine--tRNA ligase from Prosthecochloris aestuarii (strain DSM 271 / SK 413).